Here is a 910-residue protein sequence, read N- to C-terminus: Dimethylsulfide dehydrogenase subunit alpha (910 aa).

The segment at residues 1-28 (MLRTTRRTLMQGASLVGAGLFAAGRGWA) is a signal peptide (tat-type signal). A 4Fe-4S Mo/W bis-MGD-type domain is found at 59-123 (DYVGKAAHCI…IHSTSMYEAD (65 aa)). H66, C70, C74, and C109 together coordinate [4Fe-4S] cluster.

Belongs to the prokaryotic molybdopterin-containing oxidoreductase family. As to quaternary structure, heterotrimer of alpha, beta and gamma subunits. The cofactor is [4Fe-4S] cluster. Requires Mo-bis(molybdopterin guanine dinucleotide) as cofactor. Predicted to be exported by the Tat system. The position of the signal peptide cleavage has been experimentally proven.

The protein resides in the periplasm. The enzyme catalyses 2 Fe(III)-[cytochrome c2] + dimethyl sulfide + H2O = 2 Fe(II)-[cytochrome c2] + dimethyl sulfoxide + 2 H(+). Its function is as follows. Allows photoautotrophic growth on dimethyl sulfide (DMS) as the sole electron donor. This Rhodovulum sulfidophilum (Rhodobacter sulfidophilus) protein is Dimethylsulfide dehydrogenase subunit alpha (ddhA).